The sequence spans 301 residues: GPN-loop GTPase 3 (301 aa).

13–18 (GAGKST) serves as a coordination point for GTP. Residues 70-72 (GPN) carry the Gly-Pro-Asn (GPN)-loop; involved in dimer interface motif. 176–179 (SKMD) serves as a coordination point for GTP. Residues 212 to 232 (IAEGQDAEDDESKAPDEKDQV) form a disordered region. Over residues 223 to 232 (SKAPDEKDQV) the composition is skewed to basic and acidic residues.

The protein belongs to the GPN-loop GTPase family. In terms of assembly, heterodimers with GPN1 or GPN2. Binds to RNA polymerase II (RNAPII).

Functionally, small GTPase required for proper nuclear import of RNA polymerase II and III (RNAPII and RNAPIII). May act at an RNAP assembly step prior to nuclear import. The chain is GPN-loop GTPase 3 from Gibberella zeae (strain ATCC MYA-4620 / CBS 123657 / FGSC 9075 / NRRL 31084 / PH-1) (Wheat head blight fungus).